Consider the following 498-residue polypeptide: ATP synthase subunit beta, chloroplastic (498 aa).

172–179 (GGAGVGKT) lines the ATP pocket.

The protein belongs to the ATPase alpha/beta chains family. In terms of assembly, F-type ATPases have 2 components, CF(1) - the catalytic core - and CF(0) - the membrane proton channel. CF(1) has five subunits: alpha(3), beta(3), gamma(1), delta(1), epsilon(1). CF(0) has four main subunits: a(1), b(1), b'(1) and c(9-12).

The protein localises to the plastid. It localises to the chloroplast thylakoid membrane. It carries out the reaction ATP + H2O + 4 H(+)(in) = ADP + phosphate + 5 H(+)(out). Functionally, produces ATP from ADP in the presence of a proton gradient across the membrane. The catalytic sites are hosted primarily by the beta subunits. This is ATP synthase subunit beta, chloroplastic from Schisandra sphenanthera (Southern magnolia vine).